Here is a 1247-residue protein sequence, read N- to C-terminus: SAM and SH3 domain-containing protein 1 (1247 aa).

Positions 1-39 (MEDAGAAGPGPEPEPEPEPEPEPAPEPEPEPKPGAGTSE) are disordered. Residues 13-28 (PEPEPEPEPEPAPEPE) are compositionally biased toward acidic residues. Ser-90 is modified (phosphoserine). Disordered regions lie at residues 126-145 (VERK…VGKG), 221-257 (AALD…ESVK), and 316-344 (FFDG…LDTW). Ser-248 carries the post-translational modification Phosphoserine. The segment covering 331–343 (SLTTSPSSSSLDT) has biased composition (low complexity). Phosphoserine is present on Ser-407. A disordered region spans residues 449–573 (SLGKKVKSVK…DFTPSPYDTD (125 aa)). 2 stretches are compositionally biased toward low complexity: residues 468–484 (KYSS…DGMP) and 505–523 (GGSV…SMSG). Polar residues predominate over residues 524–536 (QTVSTTDSSTSNR). Residues 554-615 (PFCGRARVHT…KFIYVDVLSE (62 aa)) form the SH3 domain. The residue at position 614 (Ser-614) is a Phosphoserine. 2 disordered regions span residues 616–639 (DEEK…KSVE) and 713–810 (DSQG…LNKN). Residues 622–631 (RPTRRRRKGR) show a composition bias toward basic residues. One can recognise an SAM 1 domain in the interval 633–697 (PQPKSVEDLL…LTAVELLQEY (65 aa)). The segment covering 746–765 (SAKSSTEPSLKSFSRNQLGN) has biased composition (polar residues). Phosphoserine is present on residues Ser-821 and Ser-839. Disordered stretches follow at residues 846-884 (EPGA…PLEQ), 903-946 (PQKL…LART), and 971-1065 (DAEQ…SELP). A required for interaction with TRAF6 region spans residues 852 to 860 (DVPTEVTEP). Thr-858 carries the phosphothreonine modification. Positions 1050-1060 (GSPPSTRPPPW) are enriched in pro residues. Residues 1177–1241 (GCISSVSDWL…LSAARLFKLP (65 aa)) enclose the SAM 2 domain.

In terms of assembly, interacts with GNAS. Interacts with IQGAP1. Interacts with TRAF6 (via C-terminus); the interaction is LPS-dependent. Interacts with MAP3K7, CHUK and IKBKB. As to expression, expressed ubiquitously, with highest levels in lung, placenta, spleen and thymus. Down-regulated in the majority (74%) of breast tumors in comparison with corresponding normal breast epithelial tissues. Expressed in the epidermis, epidermal keratinocytes, dermal fibroblasts and melanocytes.

Its subcellular location is the cytoplasm. In terms of biological role, is a positive regulator of NF-kappa-B signaling downstream of TLR4 activation. It acts as a scaffold molecule to assemble a molecular complex that includes TRAF6, MAP3K7, CHUK and IKBKB, thereby facilitating NF-kappa-B signaling activation. Regulates TRAF6 and MAP3K7 ubiquitination. Involved in the regulation of cell mobility. Regulates lipolysaccharide (LPS)-induced endothelial cell migration. Is involved in the regulation of skin pigmentation through the control of melanocyte migration in the epidermis. This chain is SAM and SH3 domain-containing protein 1 (SASH1), found in Homo sapiens (Human).